The following is a 1421-amino-acid chain: Envelopment polyprotein (1421 aa).

The signal sequence occupies residues 1–20 (MEGSYWWLSLLALLAWGANG). Residues 21 to 479 (ESTSPAETSP…CRMSHRPRTC (459 aa)) lie on the Lumenal side of the membrane. Positions 22-31 (STSPAETSPA) are enriched in low complexity. The tract at residues 22–42 (STSPAETSPAPTTPNPPVVNP) is disordered. Asparagine 97 and asparagine 346 each carry an N-linked (GlcNAc...) asparagine; by host glycan. Residues 480–500 (LALFIWLGAGYGITCIAGYMV) form a helical membrane-spanning segment. Topologically, residues 501 to 610 (YYAILALSML…KLGTLLKRLS (110 aa)) are cytoplasmic. A helical membrane pass occupies residues 611–631 (WVTVFLCLFLTAIAPVQGQVT). Topologically, residues 632-643 (TSPVLPSNQSTE) are lumenal. Asparagine 639 carries N-linked (GlcNAc...) asparagine; by host glycosylation. The chain crosses the membrane as a helical span at residues 644–664 (CTLLPPPVFLIFSAVLMSKTL). Residues 665-708 (KRMGPVNKVGAAGHSARRTNSPKNLYKSKQIANTKSGPREPRRR) are Cytoplasmic-facing. Residues 709 to 729 (VVVKALLILTASSALQSIHLA) form a helical membrane-spanning segment. Residues 722–776 (ALQSIHLAQAFDSGSLPEGAWEEEMQLVQGCNQECSLEEDECSCPDGQSMTRKLL) constitute a propeptide that is removed on maturation. Residues 730–1330 (QAFDSGSLPE…GSFFRNYLGS (601 aa)) lie on the Lumenal side of the membrane. Disulfide bonds link cysteine 901/cysteine 1096 and cysteine 929/cysteine 934. Residues asparagine 1081 and asparagine 1299 are each glycosylated (N-linked (GlcNAc...) asparagine; by host). Residues 1331-1351 (ITLGIVLTLLPVAVVLLFFCY) form a helical membrane-spanning segment. Residues 1352 to 1421 (GDKLFKLCSC…GKGKNYKELV (70 aa)) are Cytoplasmic-facing.

The protein belongs to the nairovirus envelope glycoprotein family. Heterodimer with glycoprotein C; in prefusion state. As to quaternary structure, heterodimer with glycoprotein N; in prefusion state. Homotrimeric; in postfusion state. Post-translationally, specific enzymatic cleavage by host MBTPS1/S1P/SKI-1 endopeptidase yield glycoprotein N. Specific enzymatic cleavages by host furin-like protease and MBTPS1/S1P endopeptidase yield GP38. Glycosylated.

The protein localises to the host endoplasmic reticulum membrane. It is found in the virion membrane. The protein resides in the host Golgi apparatus membrane. Glycoprotein N and glycoprotein C interact with each other and are present at the surface of the virion. Glycoprotein N probably locks the Gn-Gc complex in a prefusion state. Glycoprotein N and glycoprotein C are able to attach the virion to host cell receptors. This attachment induces virion internalization predominantly through clathrin-dependent endocytosis. In terms of biological role, glycoprotein C and glycoprotein N interact with each other and are present at the surface of the virion. The spikes at the surface of the virion are formed by an N-terminal extension of glycoprotein C. Glycoprotein N and glycoprotein C are able to attach the virion to host cell receptors. This attachment induces virion internalization predominantly through clathrin-dependent endocytosis. Class II fusion protein that promotes fusion of viral membrane with host endosomal membrane after endocytosis of the virion. Exposure to potassium is necessary for the conformational change leading to fusion. The protein is Envelopment polyprotein (GP) of Ixodes.